A 213-amino-acid chain; its full sequence is NADH-quinone oxidoreductase subunit C (213 aa).

Belongs to the complex I 30 kDa subunit family. As to quaternary structure, NDH-1 is composed of 14 different subunits. Subunits NuoB, C, D, E, F, and G constitute the peripheral sector of the complex.

The protein resides in the cell inner membrane. The enzyme catalyses a quinone + NADH + 5 H(+)(in) = a quinol + NAD(+) + 4 H(+)(out). In terms of biological role, NDH-1 shuttles electrons from NADH, via FMN and iron-sulfur (Fe-S) centers, to quinones in the respiratory chain. The immediate electron acceptor for the enzyme in this species is believed to be ubiquinone. Couples the redox reaction to proton translocation (for every two electrons transferred, four hydrogen ions are translocated across the cytoplasmic membrane), and thus conserves the redox energy in a proton gradient. The sequence is that of NADH-quinone oxidoreductase subunit C from Rhodospirillum rubrum (strain ATCC 11170 / ATH 1.1.1 / DSM 467 / LMG 4362 / NCIMB 8255 / S1).